We begin with the raw amino-acid sequence, 555 residues long: Suppressor of tumorigenicity 7 protein-like (555 aa).

Transmembrane regions (helical) follow at residues 36–56 (GLAGTGASLWFVAGLGLLYAL) and 80–100 (FYVALTGTSSLISGLIFIFEW). Positions 126–148 (TESSISEPGSPSNNRESETSRQN) are disordered.

It belongs to the ST7 family.

The protein localises to the membrane. The chain is Suppressor of tumorigenicity 7 protein-like (ST7L) from Bos taurus (Bovine).